Here is a 460-residue protein sequence, read N- to C-terminus: MSSPTTSSLDTPLPGNGPPQPGAPSSSPTVKEEGPEPWPGGPDPDVPGTDEASSACSTDWVIPDPEEEPERKRKKGPAPKMLGHELCRVCGDKASGFHYNVLSCEGCKGFFRRSVVRGGARRYACRGGGTCQMDAFMRRKCQQCRLRKCKEAGMREQCVLSEEQIRKKKIRKQQQESQSQSQSPVGPQGSSSSASGPGASPGGSEAGSQGSGEGEGVQLTAAQELMIQQLVAAQLQCNKRSFSDQPKVTPWPLGADPQSRDARQQRFAHFTELAIISVQEIVDFAKQVPGFLQLGREDQIALLKASTIEIMLLETARRYNHETECITFLKDFTYSKDDFHRAGLQVEFINPIFEFSRAMRRLGLDDAEYALLIAINIFSADRPNVQEPGRVEALQQPYVEALLSYTRIKRPQDQLRFPRMLMKLVSLRTLSSVHSEQVFALRLQDKKLPPLLSEIWDVHE.

A compositionally biased stretch (low complexity) spans 1-14 (MSSPTTSSLDTPLP). Residues 1–78 (MSSPTTSSLD…PERKRKKGPA (78 aa)) form a disordered region. The interval 1–85 (MSSPTTSSLD…GPAPKMLGHE (85 aa)) is transactivation AF-1; required for ligand-independent transactivation function. Over residues 36–45 (EPWPGGPDPD) the composition is skewed to pro residues. The segment at residues 84-161 (HELCRVCGDK…AGMREQCVLS (78 aa)) is a DNA-binding region (nuclear receptor). 2 consecutive NR C4-type zinc fingers follow at residues 87 to 107 (CRVC…CEGC) and 125 to 149 (CRGG…LRKC). The interval 169-216 (KIRKQQQESQSQSQSPVGPQGSSSSASGPGASPGGSEAGSQGSGEGEG) is disordered. A compositionally biased stretch (low complexity) spans 175 to 198 (QESQSQSQSPVGPQGSSSSASGPG). A compositionally biased stretch (gly residues) spans 199–215 (ASPGGSEAGSQGSGEGE). The interval 219-460 (LTAAQELMIQ…LLSEIWDVHE (242 aa)) is transactivation AF-2; required for ligand-dependent transactivation function; mediates interaction with CCAR2. Positions 222–460 (AQELMIQQLV…LLSEIWDVHE (239 aa)) constitute an NR LBD domain. Residues lysine 409 and lysine 447 each participate in a glycyl lysine isopeptide (Lys-Gly) (interchain with G-Cter in SUMO2) cross-link.

This sequence belongs to the nuclear hormone receptor family. NR1 subfamily. In terms of assembly, forms a heterodimer with RXR. Interacts with CCAR2 (via N-terminus) in a ligand-independent manner. Interacts (when sumoylated) with GPS2; interaction with GPS2 onto hepatic acute phase protein promoters prevents N-Cor corepressor complex dissociation. Interacts with ABCA12 and ABCA1; this interaction is required for ABCA1 localization to the cell surface and is necessary for its normal activity and stability. In terms of processing, sumoylated by SUMO2 at Lys-409 and Lys-447 during the hepatic acute phase response, leading to promote interaction with GPS2 and prevent N-Cor corepressor complex dissociation. Ubiquitous.

The protein localises to the nucleus. Nuclear receptor that exhibits a ligand-dependent transcriptional activation activity. Binds preferentially to double-stranded oligonucleotide direct repeats having the consensus half-site sequence 5'-AGGTCA-3' and 4-nt spacing (DR-4). Regulates cholesterol uptake through MYLIP-dependent ubiquitination of LDLR, VLDLR and LRP8; DLDLR and LRP8. Interplays functionally with RORA for the regulation of genes involved in liver metabolism. Induces LPCAT3-dependent phospholipid remodeling in endoplasmic reticulum (ER) membranes of hepatocytes, driving SREBF1 processing and lipogenesis. Via LPCAT3, triggers the incorporation of arachidonate into phosphatidylcholines of ER membranes, increasing membrane dynamics and enabling triacylglycerols transfer to nascent very low-density lipoprotein (VLDL) particles. Via LPCAT3 also counteracts lipid-induced ER stress response and inflammation, likely by modulating SRC kinase membrane compartmentalization and limiting the synthesis of lipid inflammatory mediators. Plays an anti-inflammatory role during the hepatic acute phase response by acting as a corepressor: inhibits the hepatic acute phase response by preventing dissociation of the N-Cor corepressor complex. In Homo sapiens (Human), this protein is Oxysterols receptor LXR-beta (NR1H2).